The sequence spans 515 residues: Maturase K (515 aa).

Belongs to the intron maturase 2 family. MatK subfamily.

The protein resides in the plastid. It localises to the chloroplast. Its function is as follows. Usually encoded in the trnK tRNA gene intron. Probably assists in splicing its own and other chloroplast group II introns. This Pinus pinea (Italian stone pine) protein is Maturase K.